A 426-amino-acid chain; its full sequence is Serine/threonine-protein kinase ssn3 (426 aa).

One can recognise a Protein kinase domain in the interval 41–368 (YHIVGFISSG…AREALEHPYF (328 aa)). ATP contacts are provided by residues 47 to 55 (ISSGTYGRV) and lysine 71. Aspartate 173 functions as the Proton acceptor in the catalytic mechanism. The segment at 390-426 (RVTQDDNDIRSGSLPGTKRSGLPDDSLMGRAAKRLKE) is disordered.

It belongs to the protein kinase superfamily. CMGC Ser/Thr protein kinase family. CDC2/CDKX subfamily. In terms of assembly, component of the srb8-11 complex, a regulatory module of the Mediator complex. Requires Mg(2+) as cofactor.

Its subcellular location is the nucleus. It carries out the reaction L-seryl-[protein] + ATP = O-phospho-L-seryl-[protein] + ADP + H(+). It catalyses the reaction L-threonyl-[protein] + ATP = O-phospho-L-threonyl-[protein] + ADP + H(+). The enzyme catalyses [DNA-directed RNA polymerase] + ATP = phospho-[DNA-directed RNA polymerase] + ADP + H(+). In terms of biological role, component of the srb8-11 complex. The srb8-11 complex is a regulatory module of the Mediator complex which is itself involved in regulation of basal and activated RNA polymerase II-dependent transcription. The srb8-11 complex may be involved in the transcriptional repression of a subset of genes regulated by Mediator. It may inhibit the association of the Mediator complex with RNA polymerase II to form the holoenzyme complex. The srb8-11 complex phosphorylates the C-terminal domain (CTD) of the largest subunit of RNA polymerase II. The sequence is that of Serine/threonine-protein kinase ssn3 (ssn3) from Aspergillus fumigatus (strain ATCC MYA-4609 / CBS 101355 / FGSC A1100 / Af293) (Neosartorya fumigata).